We begin with the raw amino-acid sequence, 372 residues long: Cytochrome b (372 aa).

4 helical membrane passes run F25–I45, W69–I90, W105–L125, and F170–I190. Heme b-binding residues include H75 and H89. Heme b contacts are provided by H174 and H188. An a ubiquinone-binding site is contributed by H193. 4 helical membrane passes run Y218–S238, L280–H300, M312–S332, and Y339–P358.

The protein belongs to the cytochrome b family. As to quaternary structure, the cytochrome bc1 complex contains 3 respiratory subunits (MT-CYB, CYC1 and UQCRFS1), 2 core proteins (UQCRC1 and UQCRC2) and probably 6 low-molecular weight proteins. The cofactor is heme b.

It is found in the mitochondrion inner membrane. Its function is as follows. Component of the ubiquinol-cytochrome c reductase complex (complex III or cytochrome b-c1 complex) that is part of the mitochondrial respiratory chain. The b-c1 complex mediates electron transfer from ubiquinol to cytochrome c. Contributes to the generation of a proton gradient across the mitochondrial membrane that is then used for ATP synthesis. The polypeptide is Cytochrome b (MT-CYB) (Acrochordus granulatus (Rasp-skinned water snake)).